We begin with the raw amino-acid sequence, 360 residues long: Photosystem II protein D1 1 (360 aa).

Helical transmembrane passes span 29–46 (YVGWFGVLMIPTLLTATT), 118–133 (HFLIGVFCYMGREWEL), and 142–156 (WICVAFSAPVAAATA). Chlorophyll a is bound at residue His-118. Pheophytin a is bound at residue Tyr-126. Asp-170 and Glu-189 together coordinate [CaMn4O5] cluster. The chain crosses the membrane as a helical span at residues 197-218 (FHMLGVAGVFGGSLFSAMHGSL). His-198 provides a ligand contact to chlorophyll a. A quinone contacts are provided by residues His-215 and 264 to 265 (SF). Residue His-215 coordinates Fe cation. Residue His-272 coordinates Fe cation. The chain crosses the membrane as a helical span at residues 274 to 288 (FLGAWPVVGIWFTAL). The [CaMn4O5] cluster site is built by His-332, Glu-333, Asp-342, and Ala-344. Positions 345–360 (AGEQAPVALQAPAING) are excised as a propeptide.

This sequence belongs to the reaction center PufL/M/PsbA/D family. As to quaternary structure, PSII is composed of 1 copy each of membrane proteins PsbA, PsbB, PsbC, PsbD, PsbE, PsbF, PsbH, PsbI, PsbJ, PsbK, PsbL, PsbM, PsbT, PsbX, PsbY, PsbZ, Psb30/Ycf12, peripheral proteins PsbO, CyanoQ (PsbQ), PsbU, PsbV and a large number of cofactors. It forms dimeric complexes. Requires The D1/D2 heterodimer binds P680, chlorophylls that are the primary electron donor of PSII, and subsequent electron acceptors. It shares a non-heme iron and each subunit binds pheophytin, quinone, additional chlorophylls, carotenoids and lipids. D1 provides most of the ligands for the Mn4-Ca-O5 cluster of the oxygen-evolving complex (OEC). There is also a Cl(-1) ion associated with D1 and D2, which is required for oxygen evolution. The PSII complex binds additional chlorophylls, carotenoids and specific lipids. as cofactor. Post-translationally, tyr-161 forms a radical intermediate that is referred to as redox-active TyrZ, YZ or Y-Z. C-terminally processed by CtpA; processing is essential to allow assembly of the oxygen-evolving complex and thus photosynthetic growth.

It is found in the cellular thylakoid membrane. It catalyses the reaction 2 a plastoquinone + 4 hnu + 2 H2O = 2 a plastoquinol + O2. Functionally, photosystem II (PSII) is a light-driven water:plastoquinone oxidoreductase that uses light energy to abstract electrons from H(2)O, generating O(2) and a proton gradient subsequently used for ATP formation. It consists of a core antenna complex that captures photons, and an electron transfer chain that converts photonic excitation into a charge separation. The D1/D2 (PsbA/PsbD) reaction center heterodimer binds P680, the primary electron donor of PSII as well as several subsequent electron acceptors. This chain is Photosystem II protein D1 1, found in Picosynechococcus sp. (strain ATCC 27264 / PCC 7002 / PR-6) (Agmenellum quadruplicatum).